The primary structure comprises 1284 residues: MLPYNSNYLSDNGKRKFSDENPQSEVYGSSQTGLPSSYGNPQSYGTPPVQQSSAMYGVNNSMGGGMYNTSENTQFMNTDYSQTSSYASTPMSNAYSRDAPAAINNNFGYSYVGQSSQPVPSYNPLPSYNTASLPNAGIPAAMPGMPSGYPGTVPIPQGGYNAHYSSPYNNGYPIGAVNPTSAIPAQPPAQPVNNVLPSYVRSNSRSSARSTARSAPRSTQRSRSSSANPVTTPPVNNTLLTPPAPPVELPPVTTTSPNAIIRSVQWIRSFVPQAPIHQVINTLAQTKWDETAALSILSQKYLSCDLGIPIQEHKRFKQSPVASNMPTYGSSNRTVQSQKRSIRDKYIQMPNDSTQASLMPSYTRKTSNASKKLTTEEDEFYDSEEEPEAIVHRDTSALERTVLNFINSSTAKELSDTASCPLSHSKLLLEHRPFQTLAEACIIKHPDDVPSKPGRRGRRREKNPMGQKIVNACMETMEGYYAIDNLIAKCEFLGNRISKGMASWGIKLEMSNGELNIVDMESVPTEAADNSDFPKFVTEQPKTLASDVQLKSYQLVGVNWLHLLYQQKLSGILADEMGLGKTCQVVAFFALLLEQGHHGPHLVVVPSSTLENWLRELARFCPSLRVEPYYGSQQERANIREAIEENEIKYDILVTTYQLATNNKEDRSFLKHQNFDVCVYDEGHYLKNRMSERYKHLMNLNANFRLLLTGTPLQNNLKELVSLLAFILPNMFDSDMDDLDVIFKAKPTADADIEQALLSKQRISRAKTMMTPFVLRRRKNQVLNDLPKKTQIIEHCKLSENQLEIYNRYAALQKNQQLRRDDKRNKRSKNDEESDGKSLSAGHVLMQLRKAANHALLFRKFYDDEKLKQMAKDIMQEEQYKNANEQYIYEDMEVMSDFELHRLCRSFPTLQSYTLKDDPWMDSGKIRVLKELLPKMKEEGSRILLFSQFTQMLDILEQVLDTLKISYVRLDGSTQVEVRQDIIDQFHKEEDVTVFLLSTKAGGFGINLACANVVILYDCSYNPFDDLQAEDRAHRVGQVREVTVIRLITDNTIEEYIQKLANTKLALDMSLSSDGKDREEIGERLVQDMLDEENNGNNTKPEITGNESDGEFKVSSSNNSKQTDAEETNTGVPLEGSQPNSVEKTDLADGDEKANIKTEMKSETVEGDNKELRETMKGENVQTDSNAAVPSSKSSTEEPNESVLSGHLDLDTEASPVVSTIEKTTKGDVSVTEEQQSANIDGQLEKPEIEESKKPDVLNQVSLSIEEEKPKNKESEVDNNAAKD.

Polar residues-rich tracts occupy residues 1–10 and 20–57; these read MLPYNSNYLS and ENPQ…AMYG. Disordered regions lie at residues 1-57, 185-252, 317-339, 353-388, and 446-465; these read MLPY…AMYG, AQPP…LPPV, KQSP…QSQK, STQA…EEPE, and PDDV…KNPM. The segment covering 201 to 241 has biased composition (low complexity); it reads RSNSRSSARSTARSAPRSTQRSRSSSANPVTTPPVNNTLLT. 2 stretches are compositionally biased toward polar residues: residues 320–339 and 353–372; these read PVAS…QSQK and STQA…ASKK. The residue at position 323 (Ser323) is a Phosphoserine. Acidic residues predominate over residues 376 to 388; the sequence is EEDEFYDSEEEPE. Ser383 is subject to Phosphoserine. Residues 562–730 form the Helicase ATP-binding domain; the sequence is HLLYQQKLSG…VSLLAFILPN (169 aa). Residue 575–582 participates in ATP binding; sequence DEMGLGKT. Residues 681-684 carry the DEGH box motif; it reads DEGH. Residues 816–839 are disordered; the sequence is QQLRRDDKRNKRSKNDEESDGKSL. The span at 818–831 shows a compositional bias: basic and acidic residues; the sequence is LRRDDKRNKRSKND. The Helicase C-terminal domain occupies 928-1079; sequence VLKELLPKMK…SLSSDGKDRE (152 aa). A disordered region spans residues 1088–1284; the sequence is DMLDEENNGN…SEVDNNAAKD (197 aa). A compositionally biased stretch (polar residues) spans 1095–1107; that stretch reads NGNNTKPEITGNE. A compositionally biased stretch (basic and acidic residues) spans 1143 to 1177; that stretch reads EKTDLADGDEKANIKTEMKSETVEGDNKELRETMK. The span at 1180–1194 shows a compositional bias: polar residues; that stretch reads NVQTDSNAAVPSSKS. 2 stretches are compositionally biased toward basic and acidic residues: residues 1243–1256 and 1266–1284; these read QLEK…KKPD and EEEK…AAKD.

It belongs to the SNF2/RAD54 helicase family.

The protein localises to the cytoplasm. It is found in the nucleus. The catalysed reaction is ATP + H2O = ADP + phosphate + H(+). Functionally, DNA helicase that possesses intrinsic ATP-dependent nucleosome-remodeling activity and is required for heterochromatin organization. This chain is ATP-dependent helicase fft2 (fft2), found in Schizosaccharomyces pombe (strain 972 / ATCC 24843) (Fission yeast).